Here is a 76-residue protein sequence, read N- to C-terminus: Translational regulator CsrA (76 aa).

This sequence belongs to the CsrA/RsmA family. As to quaternary structure, homodimer; the beta-strands of each monomer intercalate to form a hydrophobic core, while the alpha-helices form wings that extend away from the core.

Its subcellular location is the cytoplasm. A translational regulator that binds mRNA to regulate translation initiation and/or mRNA stability. Usually binds in the 5'-UTR at or near the Shine-Dalgarno sequence preventing ribosome-binding, thus repressing translation. Its main target seems to be the major flagellin gene, while its function is anatagonized by FliW. The chain is Translational regulator CsrA from Helicobacter pylori (strain J99 / ATCC 700824) (Campylobacter pylori J99).